The primary structure comprises 188 residues: UPF0301 protein Smal_0940 (188 aa).

Belongs to the UPF0301 (AlgH) family.

This Stenotrophomonas maltophilia (strain R551-3) protein is UPF0301 protein Smal_0940.